The following is a 304-amino-acid chain: Protoheme IX farnesyltransferase 1 (304 aa).

A run of 8 helical transmembrane segments spans residues 24–44 (VVVL…KAPL), 47–67 (FVPW…AGAA), 99–119 (MALG…LAFT), 122–142 (LTAW…TGFL), 150–170 (IVIG…AITG), 176–196 (PLLL…ALCI), 228–248 (LVLF…LVYL), and 280–300 (YSIV…YLPL).

Belongs to the UbiA prenyltransferase family. Protoheme IX farnesyltransferase subfamily.

Its subcellular location is the cell inner membrane. The enzyme catalyses heme b + (2E,6E)-farnesyl diphosphate + H2O = Fe(II)-heme o + diphosphate. Its pathway is porphyrin-containing compound metabolism; heme O biosynthesis; heme O from protoheme: step 1/1. In terms of biological role, converts heme B (protoheme IX) to heme O by substitution of the vinyl group on carbon 2 of heme B porphyrin ring with a hydroxyethyl farnesyl side group. The chain is Protoheme IX farnesyltransferase 1 from Pseudomonas aeruginosa (strain UCBPP-PA14).